Here is a 90-residue protein sequence, read N- to C-terminus: uncharacterized protein (90 aa).

This is an uncharacterized protein from Homo sapiens (Human).